A 484-amino-acid chain; its full sequence is Glutamate--tRNA ligase (484 aa).

The 'HIGH' region motif lies at 11-21 (PSPTGYLHIGN). Positions 252-256 (KLSKR) match the 'KMSKS' region motif. Residue Lys-255 participates in ATP binding.

Belongs to the class-I aminoacyl-tRNA synthetase family. Glutamate--tRNA ligase type 1 subfamily. In terms of assembly, monomer.

It localises to the cytoplasm. It catalyses the reaction tRNA(Glu) + L-glutamate + ATP = L-glutamyl-tRNA(Glu) + AMP + diphosphate. Catalyzes the attachment of glutamate to tRNA(Glu) in a two-step reaction: glutamate is first activated by ATP to form Glu-AMP and then transferred to the acceptor end of tRNA(Glu). In Staphylococcus aureus (strain bovine RF122 / ET3-1), this protein is Glutamate--tRNA ligase.